A 283-amino-acid chain; its full sequence is 4-diphosphocytidyl-2-C-methyl-D-erythritol kinase (283 aa).

Lysine 10 is an active-site residue. Proline 94–serine 104 contributes to the ATP binding site. Residue aspartate 136 is part of the active site.

Belongs to the GHMP kinase family. IspE subfamily.

It catalyses the reaction 4-CDP-2-C-methyl-D-erythritol + ATP = 4-CDP-2-C-methyl-D-erythritol 2-phosphate + ADP + H(+). The protein operates within isoprenoid biosynthesis; isopentenyl diphosphate biosynthesis via DXP pathway; isopentenyl diphosphate from 1-deoxy-D-xylulose 5-phosphate: step 3/6. In terms of biological role, catalyzes the phosphorylation of the position 2 hydroxy group of 4-diphosphocytidyl-2C-methyl-D-erythritol. This chain is 4-diphosphocytidyl-2-C-methyl-D-erythritol kinase, found in Enterococcus faecalis (strain ATCC 700802 / V583).